Consider the following 55-residue polypeptide: Large ribosomal subunit protein bL33 (55 aa).

A compositionally biased stretch (basic and acidic residues) spans 1–11; sequence MAKSGRDKIKL. A disordered region spans residues 1–28; that stretch reads MAKSGRDKIKLESTAGTGHFYTTTKNKR. Residues 14 to 24 are compositionally biased toward polar residues; the sequence is TAGTGHFYTTT.

This sequence belongs to the bacterial ribosomal protein bL33 family.

The sequence is that of Large ribosomal subunit protein bL33 from Janthinobacterium sp. (strain Marseille) (Minibacterium massiliensis).